A 761-amino-acid chain; its full sequence is NADP-dependent malic enzyme (761 aa).

Residues 1-437 form a malic enzyme region; sequence MPGIDKTDRA…QLSARRDPIA (437 aa). The active-site Proton donor is the Y49. The active-site Proton acceptor is K104. Residues E146, D147, and D172 each coordinate a divalent metal cation. NADP(+) contacts are provided by residues 205–208, N297, and N329; that span reads AGAA. Residues 438–761 are phosphate acetyltransferase; sequence STLQRIVERV…AAIAAYNAGT (324 aa).

The protein in the N-terminal section; belongs to the malic enzymes family. In the C-terminal section; belongs to the phosphate acetyltransferase and butyryltransferase family. As to quaternary structure, homooctamer. Mg(2+) serves as cofactor. Mn(2+) is required as a cofactor.

The catalysed reaction is (S)-malate + NADP(+) = pyruvate + CO2 + NADPH. The enzyme catalyses oxaloacetate + H(+) = pyruvate + CO2. The sequence is that of NADP-dependent malic enzyme (tme) from Rhizobium meliloti (strain 1021) (Ensifer meliloti).